Reading from the N-terminus, the 100-residue chain is MNSSCEKIFGVLRSPRVSEKSSRLQEISNVYVFEVSSDATKVDVKNAVERLFDVKVGVVRVLNVKGKSKSFRNRGGSRSGWRKAYVRLIDGQSIDVAANV.

Belongs to the universal ribosomal protein uL23 family. As to quaternary structure, part of the 50S ribosomal subunit. Contacts protein L29, and trigger factor when it is bound to the ribosome.

In terms of biological role, one of the early assembly proteins it binds 23S rRNA. One of the proteins that surrounds the polypeptide exit tunnel on the outside of the ribosome. Forms the main docking site for trigger factor binding to the ribosome. The sequence is that of Large ribosomal subunit protein uL23 from Xylella fastidiosa (strain 9a5c).